We begin with the raw amino-acid sequence, 491 residues long: MTTWNKCLKKLKKSLSTFEYKTWIKPIHVEQNNYLFTIYCNNEYFKKHIKSKYGEIISSTIQEFHDGDLLIEYSNKKFSGEKSPEVTSVGPQANFFNQKNVEIKDDSEETSLNQEPKKSQKKLSSKNSASQELFGFDEAMLITDKDDQEYSFGLPLKEKYVFDSFVVGDANKIARAAAMQVSINPGKLHNPLFIYGGSGLGKTHLMQAIGNHAREVNPNARIIYTNSEQFIKDYVNSIRLQDQDEFQRVYRSADILLIDDIQFIAGKEGTAQEFFHTFNALYENGKQIILTSDKYPNEIEGLEERLVSRFGYGLTVSVDMPDLETRIAILLKKAHDLGQKLPNETAAFIAENVRTNVRELEGALNRVLTTSKFNHKDPTIEVAQACLRDVIKIQEKKVKIDNIQKVVADFYRIRVKDLTSNQRSRNIARPRQIAMSLARELTSHSLPEIGNAFGGRDHTTVMHAVKAITKLRQSNTSISDDYELLLDKISR.

The domain I, interacts with DnaA modulators stretch occupies residues 1–69 (MTTWNKCLKK…TIQEFHDGDL (69 aa)). The tract at residues 69-154 (LLIEYSNKKF…KDDQEYSFGL (86 aa)) is domain II. Positions 106-126 (DSEETSLNQEPKKSQKKLSSK) are disordered. Residues 155-371 (PLKEKYVFDS…GALNRVLTTS (217 aa)) are domain III, AAA+ region. ATP is bound by residues G199, G201, K202, and T203. Residues 372–491 (KFNHKDPTIE…YELLLDKISR (120 aa)) form a domain IV, binds dsDNA region.

This sequence belongs to the DnaA family. In terms of assembly, oligomerizes as a right-handed, spiral filament on DNA at oriC.

The protein localises to the cytoplasm. In terms of biological role, plays an essential role in the initiation and regulation of chromosomal replication. ATP-DnaA binds to the origin of replication (oriC) to initiate formation of the DNA replication initiation complex once per cell cycle. Binds the DnaA box (a 9 base pair repeat at the origin) and separates the double-stranded (ds)DNA. Forms a right-handed helical filament on oriC DNA; dsDNA binds to the exterior of the filament while single-stranded (ss)DNA is stabiized in the filament's interior. The ATP-DnaA-oriC complex binds and stabilizes one strand of the AT-rich DNA unwinding element (DUE), permitting loading of DNA polymerase. After initiation quickly degrades to an ADP-DnaA complex that is not apt for DNA replication. Binds acidic phospholipids. The protein is Chromosomal replication initiator protein DnaA of Francisella philomiragia subsp. philomiragia (strain ATCC 25017 / CCUG 19701 / FSC 153 / O#319-036).